The sequence spans 324 residues: Lipid droplet-associated hydrolase (324 aa).

Catalysis depends on Ser-136, which acts as the Nucleophile. Catalysis depends on charge relay system residues Asp-270 and His-299.

It belongs to the AB hydrolase superfamily. LDAH family.

Its subcellular location is the lipid droplet. It is found in the endoplasmic reticulum. It carries out the reaction a cholesterol ester + H2O = cholesterol + a fatty acid + H(+). Probable serine lipid hydrolase associated with lipid droplets. Has low cholesterol esterase activity. Appears to lack triglyceride lipase activity. Involved in cholesterol and triglyceride homeostasis; stimulates cellular triglyceride accumulation and cellular cholesterol release. The sequence is that of Lipid droplet-associated hydrolase from Gallus gallus (Chicken).